A 378-amino-acid polypeptide reads, in one-letter code: Putative glycosyltransferase ORF378 (378 aa).

This sequence belongs to the glycosyltransferase group 1 family. Glycosyltransferase 4 subfamily.

The polypeptide is Putative glycosyltransferase ORF378 (Acidianus sp. F28 (AFV-2)).